The sequence spans 541 residues: Chaperonin GroEL 2 (541 aa).

ATP-binding positions include 29–32 and 86–90; these read TLGP and DGTTT. Lys132 is covalently cross-linked (Isoglutamyl lysine isopeptide (Lys-Gln) (interchain with Q-Cter in protein Pup)). ATP-binding positions include Gly413, 476-478, and Asp492; that span reads NAA.

It belongs to the chaperonin (HSP60) family. As to quaternary structure, forms a cylinder of 14 subunits composed of two heptameric rings stacked back-to-back. Interacts with the co-chaperonin GroES.

It localises to the secreted. The protein localises to the capsule. The protein resides in the cell surface. It is found in the cell wall. It catalyses the reaction ATP + H2O + a folded polypeptide = ADP + phosphate + an unfolded polypeptide.. In terms of biological role, together with its co-chaperonin GroES, plays an essential role in assisting protein folding. The GroEL-GroES system forms a nano-cage that allows encapsulation of the non-native substrate proteins and provides a physical environment optimized to promote and accelerate protein folding. The chain is Chaperonin GroEL 2 from Mycolicibacterium smegmatis (strain ATCC 700084 / mc(2)155) (Mycobacterium smegmatis).